Reading from the N-terminus, the 221-residue chain is Translation initiation factor 6 (221 aa).

Belongs to the eIF-6 family.

Functionally, binds to the 50S ribosomal subunit and prevents its association with the 30S ribosomal subunit to form the 70S initiation complex. This chain is Translation initiation factor 6, found in Halorubrum lacusprofundi (strain ATCC 49239 / DSM 5036 / JCM 8891 / ACAM 34).